A 178-amino-acid chain; its full sequence is Large ribosomal subunit protein uL6 (178 aa).

The protein belongs to the universal ribosomal protein uL6 family. In terms of assembly, part of the 50S ribosomal subunit.

Its function is as follows. This protein binds to the 23S rRNA, and is important in its secondary structure. It is located near the subunit interface in the base of the L7/L12 stalk, and near the tRNA binding site of the peptidyltransferase center. The polypeptide is Large ribosomal subunit protein uL6 (Aliarcobacter butzleri (strain RM4018) (Arcobacter butzleri)).